Here is a 218-residue protein sequence, read N- to C-terminus: Ras-related protein Rab11D (218 aa).

20 to 27 (GDSGVGKS) serves as a coordination point for GTP. An Effector region motif is present at residues 42 to 50 (SKSTIGVEF). GTP-binding positions include 68–72 (DTAGQ) and 126–129 (NKSD). 2 S-geranylgeranyl cysteine lipidation sites follow: Cys215 and Cys216.

It belongs to the small GTPase superfamily. Rab family.

The protein localises to the cell membrane. This Lotus japonicus (Lotus corniculatus var. japonicus) protein is Ras-related protein Rab11D (RAB11D).